The following is a 505-amino-acid chain: uncharacterized protein (505 aa).

The signal sequence occupies residues 1-22 (MAILKSALVGFICFLHFFIVNA). 2 N-linked (GlcNAc...) asparagine glycosylation sites follow: asparagine 25 and asparagine 114. 5 consecutive transmembrane segments (helical) span residues 181–201 (LFLNPILLAINCLIGIWWSFI), 216–236 (ISGVVALSIVCTMVSTGYFYF), 266–286 (FLLLIVSLGYSIVVPSLGSLL), 291–311 (ILAGLQFVSSCFFLSSLFISP), and 318–338 (VILFAAPVFLITLFAMFLWIV). Asparagine 342 carries an N-linked (GlcNAc...) asparagine glycan. 2 helical membrane passes run 365–385 (IVICFGIVAYASIVAANAILI) and 400–420 (LLWFLNYGYTDILVLILMLTI). Residue asparagine 454 is glycosylated (N-linked (GlcNAc...) asparagine).

The protein belongs to the LU7TM family.

The protein localises to the membrane. This is an uncharacterized protein from Schizosaccharomyces pombe (strain 972 / ATCC 24843) (Fission yeast).